The chain runs to 379 residues: Queuine tRNA-ribosyltransferase (379 aa).

Catalysis depends on aspartate 94, which acts as the Proton acceptor. Residues 94-98 (DSGGF), aspartate 148, glutamine 191, and glycine 218 contribute to the substrate site. The interval 249–255 (GVGSPDS) is RNA binding. Aspartate 268 functions as the Nucleophile in the catalytic mechanism. An RNA binding; important for wobble base 34 recognition region spans residues 273–277 (TRIAR). Zn(2+) is bound by residues cysteine 306, cysteine 308, cysteine 311, and histidine 337.

It belongs to the queuine tRNA-ribosyltransferase family. Homodimer. Within each dimer, one monomer is responsible for RNA recognition and catalysis, while the other monomer binds to the replacement base PreQ1. It depends on Zn(2+) as a cofactor.

It catalyses the reaction 7-aminomethyl-7-carbaguanine + guanosine(34) in tRNA = 7-aminomethyl-7-carbaguanosine(34) in tRNA + guanine. The protein operates within tRNA modification; tRNA-queuosine biosynthesis. Its function is as follows. Catalyzes the base-exchange of a guanine (G) residue with the queuine precursor 7-aminomethyl-7-deazaguanine (PreQ1) at position 34 (anticodon wobble position) in tRNAs with GU(N) anticodons (tRNA-Asp, -Asn, -His and -Tyr). Catalysis occurs through a double-displacement mechanism. The nucleophile active site attacks the C1' of nucleotide 34 to detach the guanine base from the RNA, forming a covalent enzyme-RNA intermediate. The proton acceptor active site deprotonates the incoming PreQ1, allowing a nucleophilic attack on the C1' of the ribose to form the product. After dissociation, two additional enzymatic reactions on the tRNA convert PreQ1 to queuine (Q), resulting in the hypermodified nucleoside queuosine (7-(((4,5-cis-dihydroxy-2-cyclopenten-1-yl)amino)methyl)-7-deazaguanosine). This chain is Queuine tRNA-ribosyltransferase, found in Listeria monocytogenes serotype 4a (strain HCC23).